The sequence spans 325 residues: BES1/BZR1 homolog protein 4 (325 aa).

Residues 1 to 21 (MTSGTRMPTWRERENNKRRER) form a disordered region. Residues 6–89 (RMPTWREREN…RMEIGGGSAT (84 aa)) form a required for DNA-binding region. Phosphothreonine is present on threonine 169. The tract at residues 304-325 (ERIHEESGSDDLELTLGNSSTR) is disordered.

Belongs to the BZR/LAT61 family. In terms of processing, phosphorylated. Phosphorylation increases protein degradation.

The sequence is that of BES1/BZR1 homolog protein 4 (BEH4) from Arabidopsis thaliana (Mouse-ear cress).